The primary structure comprises 293 residues: MFSGSIVALVTPLDTDGEVDYNSLKSLVDYHIKAGTNGIVAVGTTGESATLSVEEHVKLVMKTLEFADGRIPVIAGTGANATHEAVTFSKLFHDSGVAGCLSVTPYYNKPTQEGLFQHYKAISEATDIPQILYNVPGRTAVDLLPETVARLAELDNIVALKDATGDLERVAITRELCGENFIQLSGDDATALDFVKLGGHGVISVTSNIAAKDMATMFALAAQGKFEEAEIINQRLMPLHNDLFVEANPIPVKWAAHRLGMITHSDIRLPLTELSLSAQPTVEQALKSAGLLK.

Threonine 45 contacts pyruvate. The active-site Proton donor/acceptor is the tyrosine 133. The active-site Schiff-base intermediate with substrate is lysine 161. Pyruvate is bound at residue isoleucine 203.

The protein belongs to the DapA family. Homotetramer; dimer of dimers.

The protein localises to the cytoplasm. It catalyses the reaction L-aspartate 4-semialdehyde + pyruvate = (2S,4S)-4-hydroxy-2,3,4,5-tetrahydrodipicolinate + H2O + H(+). It functions in the pathway amino-acid biosynthesis; L-lysine biosynthesis via DAP pathway; (S)-tetrahydrodipicolinate from L-aspartate: step 3/4. Its function is as follows. Catalyzes the condensation of (S)-aspartate-beta-semialdehyde [(S)-ASA] and pyruvate to 4-hydroxy-tetrahydrodipicolinate (HTPA). The chain is 4-hydroxy-tetrahydrodipicolinate synthase from Aliivibrio fischeri (strain MJ11) (Vibrio fischeri).